Here is a 119-residue protein sequence, read N- to C-terminus: Holo-[acyl-carrier-protein] synthase (119 aa).

2 residues coordinate Mg(2+): Asp8 and Glu58.

The protein belongs to the P-Pant transferase superfamily. AcpS family. Requires Mg(2+) as cofactor.

The protein resides in the cytoplasm. The enzyme catalyses apo-[ACP] + CoA = holo-[ACP] + adenosine 3',5'-bisphosphate + H(+). Its function is as follows. Transfers the 4'-phosphopantetheine moiety from coenzyme A to a Ser of acyl-carrier-protein. The sequence is that of Holo-[acyl-carrier-protein] synthase from Limosilactobacillus fermentum (strain NBRC 3956 / LMG 18251) (Lactobacillus fermentum).